The sequence spans 358 residues: DNA replication and repair protein RecF (358 aa).

30–37 (GANGSGKT) serves as a coordination point for ATP.

This sequence belongs to the RecF family.

It is found in the cytoplasm. In terms of biological role, the RecF protein is involved in DNA metabolism; it is required for DNA replication and normal SOS inducibility. RecF binds preferentially to single-stranded, linear DNA. It also seems to bind ATP. This is DNA replication and repair protein RecF from Edwardsiella ictaluri (strain 93-146).